A 412-amino-acid polypeptide reads, in one-letter code: Multifunctional CCA protein (412 aa).

The ATP site is built by Gly8 and Arg11. The CTP site is built by Gly8 and Arg11. Positions 21 and 23 each coordinate Mg(2+). The ATP site is built by Arg92, Arg138, and Arg141. 3 residues coordinate CTP: Arg92, Arg138, and Arg141. The HD domain maps to Thr227–Trp328.

This sequence belongs to the tRNA nucleotidyltransferase/poly(A) polymerase family. Bacterial CCA-adding enzyme type 1 subfamily. Monomer. Can also form homodimers and oligomers. Mg(2+) is required as a cofactor. Requires Ni(2+) as cofactor.

The enzyme catalyses a tRNA precursor + 2 CTP + ATP = a tRNA with a 3' CCA end + 3 diphosphate. The catalysed reaction is a tRNA with a 3' CCA end + 2 CTP + ATP = a tRNA with a 3' CCACCA end + 3 diphosphate. Its function is as follows. Catalyzes the addition and repair of the essential 3'-terminal CCA sequence in tRNAs without using a nucleic acid template. Adds these three nucleotides in the order of C, C, and A to the tRNA nucleotide-73, using CTP and ATP as substrates and producing inorganic pyrophosphate. tRNA 3'-terminal CCA addition is required both for tRNA processing and repair. Also involved in tRNA surveillance by mediating tandem CCA addition to generate a CCACCA at the 3' terminus of unstable tRNAs. While stable tRNAs receive only 3'-terminal CCA, unstable tRNAs are marked with CCACCA and rapidly degraded. In Baumannia cicadellinicola subsp. Homalodisca coagulata, this protein is Multifunctional CCA protein.